Consider the following 335-residue polypeptide: Probable geranylgeranyl transferase type-2 subunit beta (335 aa).

5 PFTB repeats span residues 74 to 115 (TEEI…IIFN), 122 to 163 (ADTI…HLLG), 170 to 211 (IDSA…AIAG), 218 to 259 (RDRT…AILG), and 266 to 312 (SDAM…DDTL). Geranylgeranyl diphosphate-binding positions include 196-198 (HSG) and 238-250 (RPEKLPDVCYSWW). Zn(2+) contacts are provided by Asp244, Cys246, and His296.

The protein belongs to the protein prenyltransferase subunit beta family. Heterodimer of an alpha and a beta subunit. Zn(2+) is required as a cofactor.

The enzyme catalyses geranylgeranyl diphosphate + L-cysteinyl-[protein] = S-geranylgeranyl-L-cysteinyl-[protein] + diphosphate. Its function is as follows. Catalyzes the transfer of a geranyl-geranyl moiety from geranyl-geranyl pyrophosphate to both cysteines in Rab proteins with an -XXCC, -XCXC and -CCXX C-terminal. In Caenorhabditis elegans, this protein is Probable geranylgeranyl transferase type-2 subunit beta (ggtb-1).